Reading from the N-terminus, the 1125-residue chain is RGS domain-containing serine/threonine-protein kinase A (1125 aa).

Disordered regions lie at residues 1 to 77, 96 to 191, 276 to 416, and 455 to 480; these read MKTS…GGNK, RRNS…IVDD, GISP…NNTN, and YVGG…PAPE. 2 stretches are compositionally biased toward low complexity: residues 7-30 and 37-66; these read SSNS…NNNN and SSKS…LSSG. The segment covering 121–136 has biased composition (basic and acidic residues); it reads LDSKPPKPFDEKDDPI. Composition is skewed to low complexity over residues 159 to 191 and 281 to 342; these read QPQQ…IVDD and NNNN…LNNS. The segment covering 343–361 has biased composition (polar residues); sequence PRYLNSSSSPRSMQHLSSK. Residues 362 to 416 show a composition bias toward low complexity; the sequence is ITTTTTTTTTTTTTTSDDNNGNTNNNISNNNNIINNSNNNSNSNNNNNNNINNTN. The region spanning 487-603 is the RGS domain; it reads KFIETITDPT…ISSPFNPEWK (117 aa). Over residues 617 to 685 the composition is skewed to low complexity; it reads TTTQPINNFN…NNSNGSNTSS (69 aa). 2 disordered regions span residues 617–710 and 723–762; these read TTTQ…KERS and NLSN…SNNN. Residues 690 to 710 show a composition bias toward basic and acidic residues; the sequence is ERLDNIKGNRERVDSNGKERS. A compositionally biased stretch (low complexity) spans 723–735; it reads NLSNHSNSSSNSN. The segment covering 736 to 748 has biased composition (basic and acidic residues); sequence GKDKDKDKDKNEN. The segment covering 749-762 has biased composition (low complexity); it reads TTDNSNNNNNSNNN. One can recognise a Protein kinase domain in the interval 842–1097; the sequence is VSIHKWIASG…YLESIIYPSV (256 aa). Residues 848 to 856 and lysine 869 contribute to the ATP site; that span reads IASGSSGRV. Aspartate 963 (proton acceptor) is an active-site residue.

The protein belongs to the protein kinase superfamily. TKL Ser/Thr protein kinase family. Post-translationally, autophosphorylated.

The protein localises to the cytoplasm. It localises to the cell membrane. The enzyme catalyses L-seryl-[protein] + ATP = O-phospho-L-seryl-[protein] + ADP + H(+). The catalysed reaction is L-threonyl-[protein] + ATP = O-phospho-L-threonyl-[protein] + ADP + H(+). With respect to regulation, up-regulated by cAMP. Its function is as follows. Serine/threonine kinase involved in negative regulation of chemotaxis. In Dictyostelium discoideum (Social amoeba), this protein is RGS domain-containing serine/threonine-protein kinase A (rckA).